Reading from the N-terminus, the 753-residue chain is Dolichyl-phosphate-mannose--protein mannosyltransferase 3 (753 aa).

The Cytoplasmic portion of the chain corresponds to 1–50; the sequence is MPYRVATGYSEKSTDDDLIWRTPIVKEELEDADNFLKDDAELYDKVKNES. The helical transmembrane segment at 51–71 threads the bilayer; sequence AVSHLDTIVMPIIFTVLGMFT. At 72–148 the chain is on the lumenal side; sequence RMYKIGRNNH…IDYVKMRLFQ (77 aa). Asparagine 124 carries an N-linked (GlcNAc...) asparagine glycan. A helical membrane pass occupies residues 149 to 169; sequence AMFSSLCVPLAYFTGRAIGFS. Residues 170–174 are Cytoplasmic-facing; sequence RLSVW. The chain crosses the membrane as a helical span at residues 175-195; the sequence is LFTILVIFENSYATLGKFILL. Topologically, residues 196–235 are lumenal; sequence DSMLLFFTVSSYFCLAKFHTMRKSPFSARWWLWLCLTGLN. A helical transmembrane segment spans residues 236 to 256; sequence LGCAISVKMVGLFIISVVGIY. At 257 to 282 the chain is on the cytoplasmic side; sequence TISELWNLLSDRSVSWKVYVNHWLAR. A helical membrane pass occupies residues 283–303; the sequence is IFGLIIIPVCVFLLCFKIHFD. Residues 304–602 lie on the Lumenal side of the membrane; that stretch reads LLSNSGPGDS…IKYFLLGSPA (299 aa). Residue asparagine 324 is glycosylated (N-linked (GlcNAc...) asparagine). An MIR 1 domain is found at 332–387; it reads PRDVALGSSIISIKNQALGGALLHSHVQPFPEGSEQQQVTVYGYSDANNEWFFQRI. Residue asparagine 398 is glycosylated (N-linked (GlcNAc...) asparagine). MIR domains lie at 401–457 and 465–523; these read IEFV…IEIV and PTLL…IETH. Residues 603–623 traverse the membrane as a helical segment; the sequence is SVWPSSIAVCALIIHVIFLTL. Residues 624–639 lie on the Cytoplasmic side of the membrane; the sequence is KWQRQCVILSDPVERD. Residues 640 to 660 traverse the membrane as a helical segment; sequence VFVMAAFYPLLAWLLHYMPFV. Topologically, residues 661–665 are lumenal; sequence VMSRV. A helical transmembrane segment spans residues 666–686; sequence VYAHHYLPTLYFALMILSYYF. Residues 687 to 703 are Cytoplasmic-facing; it reads DMITKRWATRNTGKFLR. The helical transmembrane segment at 704-724 threads the bilayer; the sequence is LGAYIVYGSIVIAGFFYFSPF. At 725-753 the chain is on the lumenal side; the sequence is SFGMDGPVDDYAYLAWLPTWQIVEDIRNT.

It belongs to the glycosyltransferase 39 family. In terms of assembly, PMT3 and PMT5 form a functional heterodimer. Also forms a minor complex with PMT1.

It is found in the endoplasmic reticulum membrane. It carries out the reaction a di-trans,poly-cis-dolichyl beta-D-mannosyl phosphate + L-seryl-[protein] = 3-O-(alpha-D-mannosyl)-L-seryl-[protein] + a di-trans,poly-cis-dolichyl phosphate + H(+). The enzyme catalyses a di-trans,poly-cis-dolichyl beta-D-mannosyl phosphate + L-threonyl-[protein] = 3-O-(alpha-D-mannosyl)-L-threonyl-[protein] + a di-trans,poly-cis-dolichyl phosphate + H(+). The protein operates within protein modification; protein glycosylation. In terms of biological role, protein O-mannosyltransferase involved in O-glycosylation which is essential for cell wall rigidity. Forms a heterodimeric complex with PMT5 and more rarely with PMT1 to transfer mannose from Dol-P-mannose to Ser or Thr residues on proteins. Seems to have redundant activity to PMT2. This chain is Dolichyl-phosphate-mannose--protein mannosyltransferase 3, found in Saccharomyces cerevisiae (strain ATCC 204508 / S288c) (Baker's yeast).